We begin with the raw amino-acid sequence, 153 residues long: CASP-like protein 5B1 (153 aa).

The Cytoplasmic portion of the chain corresponds to 1 to 20 (MRELAGSPGTWSGLSLRVGQ). Residues 21-41 (LVFAAASVCATASALGFAAYT) traverse the membrane as a helical segment. Residue Ala-42 is a topological domain, extracellular. A helical membrane pass occupies residues 43–63 (FCYLIASMGLQALWSLGLACL). At 64–76 (DCYALKFKKDLHS) the chain is on the cytoplasmic side. A helical membrane pass occupies residues 77–97 (AVLLSLFVVGDWVTAILSFAA). The Extracellular portion of the chain corresponds to 98 to 128 (SCSAAGVVVLFDRDIYACRNPQLPCGRFELA). A helical membrane pass occupies residues 129–149 (IACAFLSWAFSATSALVMFWL). Residues 150–153 (LASL) lie on the Cytoplasmic side of the membrane.

Belongs to the Casparian strip membrane proteins (CASP) family. As to quaternary structure, homodimer and heterodimers.

The protein resides in the cell membrane. The polypeptide is CASP-like protein 5B1 (Oryza sativa subsp. indica (Rice)).